Reading from the N-terminus, the 476-residue chain is Bifunctional protein GlmU (476 aa).

A pyrophosphorylase region spans residues 1–235 (MTALDIIIMA…ALQVAGVNSP (235 aa)). Residues lysine 23, glutamine 81, 86–87 (GT), 108–110 (SGD), glycine 145, glutamate 160, and asparagine 233 each bind UDP-N-acetyl-alpha-D-glucosamine. Aspartate 110 lines the Mg(2+) pocket. Asparagine 233 lines the Mg(2+) pocket. The linker stretch occupies residues 236–256 (AQLAELERAHQRAQAAALMEQ). Positions 257–476 (GVRLADPARF…WKRPAKQAKG (220 aa)) are N-acetyltransferase. Residues arginine 351 and lysine 369 each coordinate UDP-N-acetyl-alpha-D-glucosamine. Residue histidine 381 is the Proton acceptor of the active site. UDP-N-acetyl-alpha-D-glucosamine-binding residues include tyrosine 384 and asparagine 395. Residues alanine 398, 404–405 (NY), serine 423, glycine 441, and arginine 458 each bind acetyl-CoA.

It in the N-terminal section; belongs to the N-acetylglucosamine-1-phosphate uridyltransferase family. The protein in the C-terminal section; belongs to the transferase hexapeptide repeat family. Homotrimer. The cofactor is Mg(2+).

The protein localises to the cytoplasm. It catalyses the reaction alpha-D-glucosamine 1-phosphate + acetyl-CoA = N-acetyl-alpha-D-glucosamine 1-phosphate + CoA + H(+). It carries out the reaction N-acetyl-alpha-D-glucosamine 1-phosphate + UTP + H(+) = UDP-N-acetyl-alpha-D-glucosamine + diphosphate. It functions in the pathway nucleotide-sugar biosynthesis; UDP-N-acetyl-alpha-D-glucosamine biosynthesis; N-acetyl-alpha-D-glucosamine 1-phosphate from alpha-D-glucosamine 6-phosphate (route II): step 2/2. It participates in nucleotide-sugar biosynthesis; UDP-N-acetyl-alpha-D-glucosamine biosynthesis; UDP-N-acetyl-alpha-D-glucosamine from N-acetyl-alpha-D-glucosamine 1-phosphate: step 1/1. Its pathway is bacterial outer membrane biogenesis; LPS lipid A biosynthesis. Catalyzes the last two sequential reactions in the de novo biosynthetic pathway for UDP-N-acetylglucosamine (UDP-GlcNAc). The C-terminal domain catalyzes the transfer of acetyl group from acetyl coenzyme A to glucosamine-1-phosphate (GlcN-1-P) to produce N-acetylglucosamine-1-phosphate (GlcNAc-1-P), which is converted into UDP-GlcNAc by the transfer of uridine 5-monophosphate (from uridine 5-triphosphate), a reaction catalyzed by the N-terminal domain. In Acidovorax ebreus (strain TPSY) (Diaphorobacter sp. (strain TPSY)), this protein is Bifunctional protein GlmU.